A 231-amino-acid chain; its full sequence is Extracellular deoxyribonuclease (231 aa).

The first 20 residues, 1 to 20 (MMIFRFVTTLAASLPLLTFA), serve as a signal peptide directing secretion.

Belongs to the EndA/NucM nuclease family.

The protein localises to the secreted. This Vibrio cholerae serotype O1 (strain ATCC 39315 / El Tor Inaba N16961) protein is Extracellular deoxyribonuclease (dns).